The following is a 530-amino-acid chain: Autoinducer-2 kinase (530 aa).

This sequence belongs to the FGGY kinase family.

The protein localises to the cytoplasm. The catalysed reaction is (S)-4,5-dihydroxypentane-2,3-dione + ATP = (2S)-2-hydroxy-3,4-dioxopentyl phosphate + ADP + H(+). In terms of biological role, catalyzes the phosphorylation of autoinducer-2 (AI-2) to phospho-AI-2, which subsequently inactivates the transcriptional regulator LsrR and leads to the transcription of the lsr operon. Phosphorylates the ring-open form of (S)-4,5-dihydroxypentane-2,3-dione (DPD), which is the precursor to all AI-2 signaling molecules, at the C5 position. The protein is Autoinducer-2 kinase of Escherichia coli (strain SMS-3-5 / SECEC).